A 687-amino-acid polypeptide reads, in one-letter code: Ribosomal RNA processing protein 1 homolog (687 aa).

Residues 288 to 298 show a composition bias toward acidic residues; sequence DEEDDEVNAEE. Disordered regions lie at residues 288-312 and 463-624; these read DEED…RAGN and VKEA…GSGK. Basic and acidic residues-rich tracts occupy residues 463-488, 497-520, and 527-543; these read VKEA…DQTK, PKND…EEPA, and HSKT…DEQP. A compositionally biased stretch (low complexity) spans 554-564; sequence KAKPTPKTKAA. Polar residues predominate over residues 596-608; it reads KQANSKLPQSTPK. Thr-617 and Thr-620 each carry phosphothreonine. Position 622 is a phosphoserine (Ser-622).

It belongs to the RRP1 family.

It localises to the nucleus. Functionally, may be involved in the generation of 28S rRNA. In Drosophila melanogaster (Fruit fly), this protein is Ribosomal RNA processing protein 1 homolog (Nnp-1).